The following is a 450-amino-acid chain: NADH-quinone oxidoreductase subunit H (450 aa).

The next 9 membrane-spanning stretches (helical) occupy residues 18–38, 91–111, 128–148, 169–189, 201–221, 262–282, 292–312, 324–344, and 358–378; these read WWLV…TPLL, ILAP…IPFG, LPVA…GIVL, VISY…DAGT, HTWY…SMVG, VTVS…PFPL, WWPV…FVWL, FMGL…MIVA, and SIAL…LLWK. The interval 387-450 is disordered; sequence APEKPVEPRG…TGPTQENSDD (64 aa). The span at 390–400 shows a compositional bias: basic and acidic residues; sequence KPVEPRGRAEL. The span at 433 to 450 shows a compositional bias: polar residues; that stretch reads VSVTGAHSTGPTQENSDD.

The protein belongs to the complex I subunit 1 family. NDH-1 is composed of 14 different subunits. Subunits NuoA, H, J, K, L, M, N constitute the membrane sector of the complex.

The protein localises to the cell membrane. It carries out the reaction a quinone + NADH + 5 H(+)(in) = a quinol + NAD(+) + 4 H(+)(out). In terms of biological role, NDH-1 shuttles electrons from NADH, via FMN and iron-sulfur (Fe-S) centers, to quinones in the respiratory chain. The immediate electron acceptor for the enzyme in this species is believed to be ubiquinone. Couples the redox reaction to proton translocation (for every two electrons transferred, four hydrogen ions are translocated across the cytoplasmic membrane), and thus conserves the redox energy in a proton gradient. This subunit may bind ubiquinone. The polypeptide is NADH-quinone oxidoreductase subunit H (Rhodococcus jostii (strain RHA1)).